We begin with the raw amino-acid sequence, 405 residues long: Na(+)-translocating NADH-quinone reductase subunit F (405 aa).

The helical transmembrane segment at 3–23 (IILGIVMFTVIVLVLALMILF) threads the bilayer. In terms of domain architecture, 2Fe-2S ferredoxin-type spans 32–124 (GDITIKVNGE…DMDIEVPEEV (93 aa)). Positions 67, 73, 76, and 108 each coordinate [2Fe-2S] cluster. In terms of domain architecture, FAD-binding FR-type spans 127–267 (VKKWECTVIS…SGPFGEFFAK (141 aa)).

It belongs to the NqrF family. Composed of six subunits; NqrA, NqrB, NqrC, NqrD, NqrE and NqrF. [2Fe-2S] cluster serves as cofactor. The cofactor is FAD.

It localises to the cell inner membrane. The enzyme catalyses a ubiquinone + n Na(+)(in) + NADH + H(+) = a ubiquinol + n Na(+)(out) + NAD(+). In terms of biological role, NQR complex catalyzes the reduction of ubiquinone-1 to ubiquinol by two successive reactions, coupled with the transport of Na(+) ions from the cytoplasm to the periplasm. The first step is catalyzed by NqrF, which accepts electrons from NADH and reduces ubiquinone-1 to ubisemiquinone by a one-electron transfer pathway. In Neisseria meningitidis serogroup C / serotype 2a (strain ATCC 700532 / DSM 15464 / FAM18), this protein is Na(+)-translocating NADH-quinone reductase subunit F.